The following is a 150-amino-acid chain: 3-hydroxyacyl-[acyl-carrier-protein] dehydratase FabZ (150 aa).

The active site involves His51.

It belongs to the thioester dehydratase family. FabZ subfamily.

It is found in the cytoplasm. It carries out the reaction a (3R)-hydroxyacyl-[ACP] = a (2E)-enoyl-[ACP] + H2O. In terms of biological role, involved in unsaturated fatty acids biosynthesis. Catalyzes the dehydration of short chain beta-hydroxyacyl-ACPs and long chain saturated and unsaturated beta-hydroxyacyl-ACPs. The polypeptide is 3-hydroxyacyl-[acyl-carrier-protein] dehydratase FabZ (Geobacter metallireducens (strain ATCC 53774 / DSM 7210 / GS-15)).